We begin with the raw amino-acid sequence, 134 residues long: ATP synthase epsilon chain (134 aa).

This sequence belongs to the ATPase epsilon chain family. In terms of assembly, F-type ATPases have 2 components, CF(1) - the catalytic core - and CF(0) - the membrane proton channel. CF(1) has five subunits: alpha(3), beta(3), gamma(1), delta(1), epsilon(1). CF(0) has three main subunits: a, b and c.

It localises to the cell membrane. Its function is as follows. Produces ATP from ADP in the presence of a proton gradient across the membrane. In Staphylococcus saprophyticus subsp. saprophyticus (strain ATCC 15305 / DSM 20229 / NCIMB 8711 / NCTC 7292 / S-41), this protein is ATP synthase epsilon chain.